The sequence spans 166 residues: 16S rRNA aminocarboxypropyltransferase (166 aa).

S-adenosyl-L-methionine contacts are provided by Thr-17, Val-62, Ile-84, Tyr-99, and Ser-103.

The protein belongs to the TDD superfamily. TSR3 family.

Its subcellular location is the cytoplasm. The enzyme catalyses an N(1)-methylpseudouridine in rRNA + S-adenosyl-L-methionine = N(1)-methyl-N(3)-[(3S)-3-amino-3-carboxypropyl]pseudouridine in rRNA + S-methyl-5'-thioadenosine + H(+). Aminocarboxypropyltransferase that catalyzes the aminocarboxypropyl transfer on pseudouridine corresponding to position 914 in M.jannaschii 16S rRNA. It constitutes the last step in biosynthesis of the hypermodified N1-methyl-N3-(3-amino-3-carboxypropyl) pseudouridine (m1acp3-Psi). This chain is 16S rRNA aminocarboxypropyltransferase, found in Saccharolobus solfataricus (strain ATCC 35092 / DSM 1617 / JCM 11322 / P2) (Sulfolobus solfataricus).